The following is a 361-amino-acid chain: DNA replication and repair protein RecF (361 aa).

30–37 (GDNAQGKT) is an ATP binding site.

Belongs to the RecF family.

It localises to the cytoplasm. The RecF protein is involved in DNA metabolism; it is required for DNA replication and normal SOS inducibility. RecF binds preferentially to single-stranded, linear DNA. It also seems to bind ATP. This is DNA replication and repair protein RecF from Clostridium perfringens (strain ATCC 13124 / DSM 756 / JCM 1290 / NCIMB 6125 / NCTC 8237 / Type A).